A 144-amino-acid chain; its full sequence is Large ribosomal subunit protein uL15 (144 aa).

The disordered stretch occupies residues Met1–Gly52. Residues Arg21–Gly31 are compositionally biased toward gly residues.

This sequence belongs to the universal ribosomal protein uL15 family. In terms of assembly, part of the 50S ribosomal subunit.

Functionally, binds to the 23S rRNA. This is Large ribosomal subunit protein uL15 from Haemophilus ducreyi (strain 35000HP / ATCC 700724).